Consider the following 102-residue polypeptide: Protein 108 (102 aa).

A signal peptide spans 1-30; that stretch reads MASVKSSSSSSSSSFISLLLLILLVIVLQS. 4 cysteine pairs are disulfide-bonded: C41–C77, C51–C66, C67–C92, and C79–C99.

Belongs to the A9/FIL1 family. As to expression, stamen- and tapetum-specific.

It is found in the secreted. This Solanum lycopersicum (Tomato) protein is Protein 108.